The chain runs to 177 residues: Peptide methionine sulfoxide reductase MsrA 2 (177 aa).

The active site involves Cys-12.

The protein belongs to the MsrA Met sulfoxide reductase family.

It carries out the reaction L-methionyl-[protein] + [thioredoxin]-disulfide + H2O = L-methionyl-(S)-S-oxide-[protein] + [thioredoxin]-dithiol. The enzyme catalyses [thioredoxin]-disulfide + L-methionine + H2O = L-methionine (S)-S-oxide + [thioredoxin]-dithiol. Functionally, has an important function as a repair enzyme for proteins that have been inactivated by oxidation. Catalyzes the reversible oxidation-reduction of methionine sulfoxide in proteins to methionine. In Staphylococcus aureus (strain Mu50 / ATCC 700699), this protein is Peptide methionine sulfoxide reductase MsrA 2 (msrA2).